The sequence spans 321 residues: Leucine-rich repeat-containing protein 46 (321 aa).

LRR repeat units follow at residues 45–66 (ELQT…EGLK), 67–88 (NLHS…ACVP), 89–110 (SLRF…LDLP), and 111–132 (CLQF…EFPQ). Residues 142–184 (NSCTNQDSYRELVIEALPLLLDLDGQPVMERWISDEEDEASSE) form the LRRCT domain. Residues Ser175 and Ser182 each carry the phosphoserine modification. Positions 198 to 222 (RGFLKELEQELSRHREHRQQAALTQ) form a coiled coil. Positions 235–321 (NLPLLPGVPM…TKTMAKRSKK (87 aa)) are disordered.

It is found in the cell projection. The protein resides in the cilium. The protein localises to the flagellum. Required for normal spermatogenesis and male fertility. Plays an important role in sperm flagellum biogenesis. The protein is Leucine-rich repeat-containing protein 46 (LRRC46) of Macaca fascicularis (Crab-eating macaque).